The following is a 777-amino-acid chain: MSAQTSPAEKGLNPGLMCQESYACSGTDEAIFECDECCSLQCLRCEEELHRQERLRNHERIRLKPGHVPYCDLCKGLSGHLPGVRQRAIVRCQTCKINLCLECQKRTHSGGNKRRHPVTVYNVSNLQESLEAEEMDEETKRKKMTEKVVSFLLVDENEEIQVTNEEDFIRKLDCKPDQHLKVVSIFGNTGDGKSHTLNHTFFYGREVFKTSPTQESCTVGVWAAYDPVHKVAVIDTEGLLGATVNLSQRTRLLLKVLAISDLVIYRTHADRLHNDLFKFLGDASEAYLKHFTKELKATTARCGLDVPLSTLGPAVIIFHETVHTQLLGSDHPSEVPEKLIQDRFRKLGRFPEAFSSIHYKGTRTYNPPTDFSGLRRALEQLLENNTTRSPRHPGVIFKALKALSDRFSGEIPDDQMAHSSFFPDEYFTCSSLCLSCGVGCKKSMNHGKEGVPHEAKSRCRYSHQYDNRVYTCKACYERGEEVSVVPKTSASTDSPWMGLAKYAWSGYVIECPNCGVVYRSRQYWFGNQDPVDTVVRTEIVHVWPGTDGFLKDNNNAAQRLLDGMNFMAQSVSELSLGPTKAVTSWLTDQIAPAYWRPNSQILSCNKCATSFKDNDTKHHCRACGEGFCDSCSSKTRPVPERGWGPAPVRVCDNCYEARNVQLAVTEAQVDDEGGTLIARKVGEAVQNTLGAVVTAIDIPLGLVKDAARPAYWVPDHEILHCHNCRKEFSIKLSKHHCRACGQGFCDECSHDRRAVPSRGWDHPVRVCFNCNKKPGDL.

The segment at 416-777 is required for localization in the lipid droplets; it reads MAHSSFFPDE…FNCNKKPGDL (362 aa). FYVE-type zinc fingers lie at residues 598 to 659 and 715 to 775; these read NSQI…EARN and DHEI…KKPG. Zn(2+) is bound by residues C604, C607, C620, C623, C628, C631, C651, C654, C721, C724, C737, C740, C745, C748, C767, and C770.

Interacts with RAB18 (in GTP-bound form). Interacts with BSCL2 in a RAB18-dependent manner. Interacts with ZW10. As to quaternary structure, (Microbial infection) Interacts with SARS coronavirus-2/SARS-CoV-2 non-structural protein 6 (nsp6); the interaction is independent of PtdIns3P-binding and leads to endoplasmic reticulum (ER) and double membrane vesicles (DMVs) binding to lipid droplets. Highly expressed in heart. Also detected in the testis. As to expression, expressed in all tissues examined, including, brain, placenta, lung, liver, skeletal muscle, pancreas and kidney. Highly expressed in heart.

It localises to the golgi apparatus. Its subcellular location is the golgi stack. The protein localises to the endoplasmic reticulum. The protein resides in the lipid droplet. It is found in the preautophagosomal structure. It localises to the mitochondrion. In terms of biological role, plays a role in the formation of lipid droplets (LDs) which are storage organelles at the center of lipid and energy homeostasis. Regulates the morphology, size and distribution of LDs. Mediates the formation of endoplasmic reticulum-lipid droplets (ER-LD) contacts by forming a complex with RAB18 and ZW10. Binds to phosphatidylinositol 3-phosphate (PtdIns3P) through FYVE-type zinc finger. Functionally, (Microbial infection) Upon SARS coronavirus-2/SARS-CoV-2 infection, mediates through binding with non-structural protein 6 (nsp6) the replication organelle-lipid droplet association required to sustain viral replication. This chain is Zinc finger FYVE domain-containing protein 1 (ZFYVE1), found in Homo sapiens (Human).